Consider the following 121-residue polypeptide: Basic phospholipase A2 homolog zhaoermiatoxin (121 aa).

Cystine bridges form between cysteine 26-cysteine 115, cysteine 28-cysteine 44, cysteine 43-cysteine 95, cysteine 49-cysteine 121, cysteine 50-cysteine 88, cysteine 57-cysteine 81, and cysteine 75-cysteine 86.

Belongs to the phospholipase A2 family. Group II subfamily. R49 sub-subfamily. Homodimer. As to expression, expressed by the venom gland.

It is found in the secreted. Its function is as follows. Snake venom phospholipase A2 homolog that induces myonecrosis, and edema. Has low myotoxic activity. The sequence is that of Basic phospholipase A2 homolog zhaoermiatoxin from Protobothrops mangshanensis (Mangshan pitviper).